A 160-amino-acid polypeptide reads, in one-letter code: Small ribosomal subunit protein bS16 (160 aa).

A disordered region spans residues 115–139 (GGPTTEATRPKKKVSAKKAAKAVES). Basic residues predominate over residues 124-134 (PKKKVSAKKAA).

This sequence belongs to the bacterial ribosomal protein bS16 family.

The sequence is that of Small ribosomal subunit protein bS16 from Mycobacterium leprae (strain Br4923).